The following is a 623-amino-acid chain: Calnexin (623 aa).

Residues 1 to 21 form the signal peptide; sequence MLNRKWSFVFLTFLLVISVNA. Residue aspartate 108 participates in Ca(2+) binding. Cysteine 151 and cysteine 185 form a disulfide bridge. The an alpha-D-glucoside site is built by tyrosine 155, lysine 157, tyrosine 176, and aspartate 183. A glycan (N-linked (GlcNAc...) asparagine) is linked at asparagine 202. Positions 260–337 are disordered; the sequence is SLTPPKEIFD…QKPQDWDEDM (78 aa). Over residues 266 to 276 the composition is skewed to basic and acidic residues; that stretch reads EIFDETDLKPE. A p domain (Extended arm) region spans residues 267–400; sequence IFDETDLKPE…RLIDNPNYFE (134 aa). 5 consecutive repeat copies span residues 269–281, 286–298, 305–317, 324–336, and 339–349. 4 X approximate repeats regions lie at residues 269–336 and 339–396; these read DETD…WDED and GSWE…IDNP. Acidic residues-rich tracts occupy residues 277–287 and 314–323; these read DWDEREQIEDE and WNEEENELIP. A disulfide bond links cysteine 351 and cysteine 357. Tandem repeats lie at residues 358-368, 372-382, and 386-396. Glutamate 416 is an an alpha-D-glucoside binding site. Ca(2+) is bound at residue aspartate 427. Residues 480–500 traverse the membrane as a helical segment; that stretch reads LWAVYILCILLPLIAIGVFCF. The disordered stretch occupies residues 536–623; sequence IAEDEEDNQP…AKRRTARRGD (88 aa). The segment covering 556 to 565 has biased composition (acidic residues); the sequence is IDEDEQDEVE. A compositionally biased stretch (low complexity) spans 566 to 581; it reads QQPSSSKTASSESSSA. Positions 614-623 are enriched in basic residues; sequence AKRRTARRGD.

This sequence belongs to the calreticulin family. In terms of processing, glycosylation is important for its biological activity.

The protein resides in the endoplasmic reticulum membrane. The protein localises to the cytoplasm. It localises to the perinuclear region. Its subcellular location is the cytoplasmic vesicle. In terms of biological role, calcium-binding protein that interacts with newly synthesized monoglucosylated glycoproteins in the endoplasmic reticulum. It may act in assisting protein assembly and/or in the retention within the ER of unassembled protein subunits. It seems to play a major role in the quality control apparatus of the ER by the retention of incorrectly folded proteins. Required for embryogenesis and larval development under heat and ER stress conditions. May be important for germ cell development. Involved in neuronal necrotic cell death. This is Calnexin from Caenorhabditis briggsae.